A 500-amino-acid chain; its full sequence is MDPVLVLVLTLSSLLLLSLWRQSFGRGKLPPGPTPLPIIGNTLQIYMKDIGQSIKKFSKVYGPIFTLYLGMKPFVVLHGYEAVKEALVDLGEEFSGRGSFPVSERVNKGLGVIFSNGMQWKEIRRFSIMTLRTFGMGKRTIEDRIQEEAQCLVEELRKSKGAPFDPTFILGCAPCNVICSIIFQNRFDYKDPTFLNLMHRFNENFRLFSSPWLQVCNTFPAIIDYFPGSHNQVLKNFFYIKNYVLEKVKEHQESLDKDNPRDFIDCFLNKMEQEKHNPQSEFTLESLVATVTDMFGAGTETTSTTLRYGLLLLLKHVDVTAKVQEEIERVIGRNRSPCMKDRSQMPYTDAVVHEIQRYIDLVPTNLPHLVTRDIKFRNYFIPKGTNVIVSLSSILHDDKEFPNPEKFDPGHFLDERGNFKKSDYFMPFSAGKRICAGEALARTELFLFFTTILQNFNLKSLVDVKDIDTTPAISGFGHLPPFYEACFIPVQRADSLSSHL.

Heme is bound at residue C435.

It belongs to the cytochrome P450 family. It depends on heme as a cofactor. Liver and kidney; male-specific.

The protein resides in the endoplasmic reticulum membrane. Its subcellular location is the microsome membrane. The enzyme catalyses an organic molecule + reduced [NADPH--hemoprotein reductase] + O2 = an alcohol + oxidized [NADPH--hemoprotein reductase] + H2O + H(+). It carries out the reaction testosterone + reduced [NADPH--hemoprotein reductase] + O2 = 2alpha,17beta-dihydroxyandrost-4-en-3-one + oxidized [NADPH--hemoprotein reductase] + H2O + H(+). The catalysed reaction is testosterone + reduced [NADPH--hemoprotein reductase] + O2 = 16alpha,17beta-dihydroxyandrost-4-en-3-one + oxidized [NADPH--hemoprotein reductase] + H2O + H(+). It catalyses the reaction (5Z,8Z,11Z,14Z)-eicosatetraenoate + reduced [NADPH--hemoprotein reductase] + O2 = (8R,9S)-epoxy-(5Z,11Z,14Z)-eicosatrienoate + oxidized [NADPH--hemoprotein reductase] + H2O + H(+). The enzyme catalyses (5Z,8Z,11Z,14Z)-eicosatetraenoate + reduced [NADPH--hemoprotein reductase] + O2 = (8S,9R)-epoxy-(5Z,11Z,14Z)-eicosatrienoate + oxidized [NADPH--hemoprotein reductase] + H2O + H(+). It carries out the reaction (5Z,8Z,11Z,14Z)-eicosatetraenoate + reduced [NADPH--hemoprotein reductase] + O2 = (11R,12S)-epoxy-(5Z,8Z,14Z)-eicosatrienoate + oxidized [NADPH--hemoprotein reductase] + H2O + H(+). The catalysed reaction is (5Z,8Z,11Z,14Z)-eicosatetraenoate + reduced [NADPH--hemoprotein reductase] + O2 = (11S,12R)-epoxy-(5Z,8Z,14Z)-eicosatrienoate + oxidized [NADPH--hemoprotein reductase] + H2O + H(+). It catalyses the reaction (5Z,8Z,11Z,14Z)-eicosatetraenoate + reduced [NADPH--hemoprotein reductase] + O2 = (14R,15S)-epoxy-(5Z,8Z,11Z)-eicosatrienoate + oxidized [NADPH--hemoprotein reductase] + H2O + H(+). The enzyme catalyses (5Z,8Z,11Z,14Z)-eicosatetraenoate + reduced [NADPH--hemoprotein reductase] + O2 = (14S,15R)-epoxy-(5Z,8Z,11Z)-eicosatrienoate + oxidized [NADPH--hemoprotein reductase] + H2O + H(+). It carries out the reaction (5Z,8Z,11Z,14Z,17Z)-eicosapentaenoate + reduced [NADPH--hemoprotein reductase] + O2 = 8,9-epoxy-(5Z,11Z,14Z,17Z)-eicosatetraenoate + oxidized [NADPH--hemoprotein reductase] + H2O + H(+). The catalysed reaction is (5Z,8Z,11Z,14Z,17Z)-eicosapentaenoate + reduced [NADPH--hemoprotein reductase] + O2 = 11,12-epoxy-(5Z,8Z,14Z,17Z)-eicosatetraenoate + oxidized [NADPH--hemoprotein reductase] + H2O + H(+). It catalyses the reaction (5Z,8Z,11Z,14Z,17Z)-eicosapentaenoate + reduced [NADPH--hemoprotein reductase] + O2 = 14,15-epoxy-(5Z,8Z,11Z,17Z)-eicosatetraenoate + oxidized [NADPH--hemoprotein reductase] + H2O + H(+). The enzyme catalyses (5Z,8Z,11Z,14Z,17Z)-eicosapentaenoate + reduced [NADPH--hemoprotein reductase] + O2 = (17S,18R)-epoxy-(5Z,8Z,11Z,14Z)-eicosatetraenoate + oxidized [NADPH--hemoprotein reductase] + H2O + H(+). It carries out the reaction (5Z,8Z,11Z,14Z,17Z)-eicosapentaenoate + reduced [NADPH--hemoprotein reductase] + O2 = (17R,18S)-epoxy-(5Z,8Z,11Z,14Z)-eicosatetraenoate + oxidized [NADPH--hemoprotein reductase] + H2O + H(+). The protein operates within lipid metabolism; arachidonate metabolism. Its pathway is steroid metabolism. Its function is as follows. A cytochrome P450 monooxygenase involved in the metabolism of steroid hormones and fatty acids. Catalyzes the hydroxylation of carbon-hydrogen bonds. Metabolizes testosterone to 2alpha- and 16alpha-hydroxytestosterone. Catalyzes the epoxidation of double bonds of polyunsaturated fatty acids (PUFAs). Converts arachidonic acid (ARA, C20:4(n-6)) primarily to epoxyeicosatrienoic acid (EET) regioisomers, 8,9-, 11,12-, and 14,15-EET, with both R,S and S,R stereochemistry. Preferentially produces 11R,12S-EET enantiomer. To a lesser extent, catalyzes the hydroxylation of arachidonic acid producing hydroxyeicosatetraenoates (HETEs). Metabolizes eicosapentaenoic acid (EPA, C20:5(n-3)) to epoxyeicosatetraenoic acid (EETeTr) regioisomers, 8,9-, 11,12-, 14,15-, and 17,18-EETeTr, preferentially producing 17R,18S-EETeTr enantiomer. Mechanistically, uses molecular oxygen inserting one oxygen atom into a substrate, and reducing the second into a water molecule, with two electrons provided by NADPH via cytochrome P450 reductase (NADPH--hemoprotein reductase). This chain is Cytochrome P450 2C11 (Cyp2c11), found in Rattus norvegicus (Rat).